Reading from the N-terminus, the 403-residue chain is Semaphorin-like protein A39 (403 aa).

A signal peptide spans 1–14; it reads MIPLLFILFYFANG. Positions 15–403 constitute a Sema domain; it reads IEWHKFETSE…MPQMKKILKM (389 aa).

Belongs to the semaphorin family. As to quaternary structure, interacts with host VESPR.

The protein resides in the secreted. Its function is as follows. Acts as a semaphorin-like protein and binds to host plexin C1 receptor. May alter the movement of host plexin C1-expressing cells including dendritic cells, monocytes, or granulocytes in the proximity of infected cells. May also regulate host cell cytoskeleton of neighboring cells to improve viral infection. In Homo sapiens (Human), this protein is Semaphorin-like protein A39.